Here is a 340-residue protein sequence, read N- to C-terminus: 2-deoxy-scyllo-inosamine dehydrogenase (340 aa).

Zn(2+) is bound by residues Cys37, His59, Cys89, Cys92, Cys95, Cys103, and Glu144.

The protein belongs to the zinc-containing alcohol dehydrogenase family. DOIA dehydrogenase subfamily. The cofactor is Zn(2+).

The enzyme catalyses 2-deoxy-scyllo-inosamine + NADP(+) = 3-amino-2,3-dideoxy-scyllo-inosose + NADPH + H(+). It carries out the reaction 2-deoxy-scyllo-inosamine + NAD(+) = 3-amino-2,3-dideoxy-scyllo-inosose + NADH + H(+). It participates in metabolic intermediate biosynthesis; 2-deoxystreptamine biosynthesis; 2-deoxystreptamine from D-glucose 6-phosphate: step 3/4. It functions in the pathway antibiotic biosynthesis; neomycin biosynthesis. Catalyzes the oxidation of 2-deoxy-scyllo-inosamine (DOIA) with NAD(+) or NADP(+), forming 3-amino-2,3-dideoxy-scyllo-inosose (amino-DOI). This chain is 2-deoxy-scyllo-inosamine dehydrogenase (neoA), found in Streptomyces fradiae (Streptomyces roseoflavus).